The chain runs to 102 residues: PqqA binding protein (102 aa).

This sequence belongs to the PqqD family. Monomer. Interacts with PqqE.

It functions in the pathway cofactor biosynthesis; pyrroloquinoline quinone biosynthesis. In terms of biological role, functions as a PqqA binding protein and presents PqqA to PqqE, in the pyrroloquinoline quinone (PQQ) biosynthetic pathway. In Rhodopseudomonas palustris (strain ATCC BAA-98 / CGA009), this protein is PqqA binding protein.